We begin with the raw amino-acid sequence, 165 residues long: Large ribosomal subunit protein eL15 (165 aa).

The interval 126 to 147 (TSAGRKSRGLGKGHKFHHTIGG) is disordered. Positions 130–143 (RKSRGLGKGHKFHH) are enriched in basic residues.

The protein belongs to the eukaryotic ribosomal protein eL15 family. Component of the large ribosomal subunit.

The protein resides in the cytoplasm. In terms of biological role, component of the large ribosomal subunit. The ribosome is a large ribonucleoprotein complex responsible for the synthesis of proteins in the cell. The chain is Large ribosomal subunit protein eL15 (RPL15) from Gallus gallus (Chicken).